Reading from the N-terminus, the 118-residue chain is Large ribosomal subunit protein bL19 (118 aa).

The protein belongs to the bacterial ribosomal protein bL19 family.

In terms of biological role, this protein is located at the 30S-50S ribosomal subunit interface and may play a role in the structure and function of the aminoacyl-tRNA binding site. This chain is Large ribosomal subunit protein bL19, found in Campylobacter jejuni subsp. jejuni serotype O:6 (strain 81116 / NCTC 11828).